A 576-amino-acid chain; its full sequence is Probable proline--tRNA ligase, mitochondrial (576 aa).

Belongs to the class-II aminoacyl-tRNA synthetase family.

The protein resides in the mitochondrion. The catalysed reaction is tRNA(Pro) + L-proline + ATP = L-prolyl-tRNA(Pro) + AMP + diphosphate. This Saccharomyces cerevisiae (strain ATCC 204508 / S288c) (Baker's yeast) protein is Probable proline--tRNA ligase, mitochondrial (AIM10).